A 226-amino-acid chain; its full sequence is Leucyl/phenylalanyl-tRNA--protein transferase (226 aa).

The protein belongs to the L/F-transferase family.

The protein resides in the cytoplasm. The enzyme catalyses N-terminal L-lysyl-[protein] + L-leucyl-tRNA(Leu) = N-terminal L-leucyl-L-lysyl-[protein] + tRNA(Leu) + H(+). It catalyses the reaction N-terminal L-arginyl-[protein] + L-leucyl-tRNA(Leu) = N-terminal L-leucyl-L-arginyl-[protein] + tRNA(Leu) + H(+). The catalysed reaction is L-phenylalanyl-tRNA(Phe) + an N-terminal L-alpha-aminoacyl-[protein] = an N-terminal L-phenylalanyl-L-alpha-aminoacyl-[protein] + tRNA(Phe). Its function is as follows. Functions in the N-end rule pathway of protein degradation where it conjugates Leu, Phe and, less efficiently, Met from aminoacyl-tRNAs to the N-termini of proteins containing an N-terminal arginine or lysine. The protein is Leucyl/phenylalanyl-tRNA--protein transferase of Salinibacter ruber (strain DSM 13855 / M31).